Here is a 553-residue protein sequence, read N- to C-terminus: MSKAAGGAAAAAAAAESCSPAPAGSSAAPPAPVEDLSKVSDEELLQWSKEELIRSLRRAEAEKVSAMLDHSNLIREVNRRLQLHLGEIRGLKDINQKLQEDNQELRDLCCFLDDDRQKGKRVSREWQRLGRYTAGVMHKEVALYLQKLKDLEVKQEEVVKENMELKELCVLLDEEKGAGCAGSRCSIDSQASLCQLTASTAPYVRDVGDGSSTSSTGSTDSPDHHKHHASSGSPEHLQKPRSEGSPEHSKHRSASPEHPQKPRACGTPDRPKALKGPSPEHHKPLCKGSPEQQRHPHPGSSPETLPKHVLSGSPEHFQKHRSGSSPEHARHSGGSPEHLQKHALGGSLEHLPRARGTSPEHLKQHYGGSPDHKHGGGSGGSGGSGGGSREGTLRRQAQEDGSPHHRNVYSGMNESTLSYVRQLEARVRQLEEENRMLPQASQNRRQPPTRNSSNMEKGWGSRARRVLQWWQGCRGIGRCLPTLPGSFRLSSGADGSNSSPNSAASFSGHATPSQQPEPVVHSLKVVWRKLGDAAGSCPGIRQHLSGNQYKGPM.

A compositionally biased stretch (low complexity) spans methionine 1 to alanine 28. Residues methionine 1 to serine 37 form a disordered region. 2 coiled-coil regions span residues glutamate 43–cysteine 109 and methionine 137–cysteine 169. Disordered stretches follow at residues tyrosine 203–glutamate 414, glutamate 433–serine 461, and serine 491–proline 518. Low complexity predominate over residues aspartate 209 to aspartate 220. Over residues histidine 236–glutamine 260 the composition is skewed to basic and acidic residues. The span at glycine 376 to arginine 389 shows a compositional bias: gly residues. Residues glycine 391–proline 403 are compositionally biased toward basic and acidic residues. Residues methionine 412–asparagine 443 are a coiled coil. A compositionally biased stretch (polar residues) spans glutamine 439–methionine 455. Residues serine 491–glycine 508 are compositionally biased toward low complexity. An Asymmetric dimethylarginine modification is found at arginine 541.

It belongs to the CCDC85 family. May interact with ARVCF; CTNND1; CTNND2 and PKP4.

The protein resides in the cell junction. The protein localises to the adherens junction. Functionally, may play a role in cell-cell adhesion and epithelium development through its interaction with proteins of the beta-catenin family. The polypeptide is Coiled-coil domain-containing protein 85A (CCDC85A) (Homo sapiens (Human)).